An 88-amino-acid chain; its full sequence is HssA/B-like protein 17 (88 aa).

This sequence belongs to the hssA/B family.

This chain is HssA/B-like protein 17 (hssl17), found in Dictyostelium discoideum (Social amoeba).